Here is a 396-residue protein sequence, read N- to C-terminus: Elongation factor Tu 2 (396 aa).

The 197-residue stretch at 10-206 (KPHVNVGTIG…ALDTYIPTPE (197 aa)) folds into the tr-type G domain. The segment at 19-26 (GHVDHGKT) is G1. 19 to 26 (GHVDHGKT) provides a ligand contact to GTP. Residue T26 coordinates Mg(2+). Residues 60-64 (GITIN) form a G2 region. Residues 81–84 (DCPG) form a G3 region. GTP contacts are provided by residues 81–85 (DCPGH) and 136–139 (NKCD). A G4 region spans residues 136–139 (NKCD). The interval 174 to 176 (SAK) is G5.

It belongs to the TRAFAC class translation factor GTPase superfamily. Classic translation factor GTPase family. EF-Tu/EF-1A subfamily. Monomer.

It is found in the cytoplasm. The enzyme catalyses GTP + H2O = GDP + phosphate + H(+). In terms of biological role, GTP hydrolase that promotes the GTP-dependent binding of aminoacyl-tRNA to the A-site of ribosomes during protein biosynthesis. This is Elongation factor Tu 2 from Acidovorax sp. (strain JS42).